Here is a 950-residue protein sequence, read N- to C-terminus: Voltage-gated inwardly rectifying potassium channel KCNH6 (950 aa).

The Cytoplasmic segment spans residues 1-261; sequence MPVRRGHVAP…YSPFKAVWDW (261 aa). The PAS domain occupies 41 to 70; that stretch reads IIYCNDGFCELFGYSRVEVMQRPCTCDFLT. One can recognise a PAC domain in the interval 92–144; it reads CKVDILYYRKDASSFRCLVDVVPVKNEDGAVIMFILNFEDLAQLLAKSSSRSL. The segment at 154 to 174 is disordered; that stretch reads LGSEGSHSRPSGQGPGPGRGK. Residues 262–282 form a helical membrane-spanning segment; that stretch reads LILLLVIYTAVFTPYSAAFLL. At 283 to 298 the chain is on the extracellular side; that stretch reads SDQDESQRGTCGYTCS. A helical membrane pass occupies residues 299 to 319; that stretch reads PLTVVDLIVDIMFVVDIVINF. The Cytoplasmic segment spans residues 320-340; it reads RTTYVNTNDEVVSHPRRIAVH. Residues 341–361 form a helical membrane-spanning segment; that stretch reads YFKGWFLIDMVAAIPFDLLIF. Residues 362-370 lie on the Extracellular side of the membrane; the sequence is RTGSDETTT. The chain crosses the membrane as a helical; Voltage-sensor span at residues 371–391; the sequence is LIGLLKTARLLRLVRVARKLD. The Cytoplasmic portion of the chain corresponds to 392–398; sequence RYSEYGA. Residues 399-419 traverse the membrane as a helical segment; sequence AVLFLLMCTFALIAHWLACIW. The Extracellular portion of the chain corresponds to 420–463; that stretch reads YAIGNVERPYLEPKIGWLDSLGAQLGKQYNGSDPASGPSVQDKY. An intramembrane region (pore-forming) is located at residues 464–484; that stretch reads VTALYFTFSSLTSVGFGNVSP. The Selectivity filter motif lies at 476-481; the sequence is SVGFGN. Over 485–490 the chain is Extracellular; it reads NTNSEK. Residues 491–511 traverse the membrane as a helical segment; it reads VFSICVMLIGSLMYASIFGNV. Over 512–950 the chain is Cytoplasmic; it reads SAIIQRLYSG…HGSDPGFTRS (439 aa). Residues 594 to 694 form a cNMP-binding domain region; the sequence is AFRGASKGCL…IHRADLLEVL (101 aa). 2 disordered regions span residues 719 to 750 and 890 to 950; these read GGLQ…APSL and VPSS…FTRS. Polar residues predominate over residues 740–750; the sequence is NDSQSGAAPSL. A compositionally biased stretch (low complexity) spans 898 to 912; the sequence is PGGLLSPLASPLRPL.

It belongs to the potassium channel family. H (Eag) (TC 1.A.1.20) subfamily. Kv11.2/KCNH6 sub-subfamily. In terms of assembly, the potassium channel is probably composed of a homo- or heterotetrameric complex of pore-forming alpha subunits that can associate only within their subfamily. Highly expressed in celiac and superior mesenteric ganglia, but not detected in brain or in heart. Detected at low levels in retina. Also found in pituitary. Also found in the olfactory bulb (granular and mitral cell layers).

The protein localises to the cell membrane. It catalyses the reaction K(+)(in) = K(+)(out). In terms of biological role, pore-forming (alpha) subunit of voltage-gated inwardly rectifying potassium channel. Characterized by unusual gating kinetics by producing relatively small outward currents during membrane depolarization and large inward currents during subsequent repolarization which reflect a rapid inactivation during depolarization and quick recovery from inactivation but slow deactivation (closing) during repolarization. Activates even more slowly than KCNH2. This is Voltage-gated inwardly rectifying potassium channel KCNH6 from Rattus norvegicus (Rat).